The chain runs to 750 residues: Rho GTPase-activating protein 9 (750 aa).

One can recognise an SH3 domain in the interval 22–88; sequence PRGSQLCALY…PAAYMIEESI (67 aa). Disordered regions lie at residues 120–187 and 242–319; these read ALPS…LMSE and WKPP…LLDD. Over residues 163–180 the composition is skewed to polar residues; it reads RSLSQEDLPSEASASTAG. One can recognise a WW domain in the interval 213–247; sequence LQRLDAWEQHLDPNSGRCFYINSLTGCKSWKPPRR. Polar residues-rich tracts occupy residues 251–270 and 291–300; these read ETNP…NDVL and GSLSLSQRTS. Residues 301 to 317 show a composition bias toward low complexity; the sequence is QLDPPALQAPRPLPQLL. A PH domain is found at 322–435; that stretch reads EVEKSGLLNM…WHRALRTVIE (114 aa). Lipid binding stretches follow at residues 342–345, 397–399, and 432–669; these read RKNW, SSR, and TVIE…CLSQ. Positions 446-462 are enriched in basic and acidic residues; that stretch reads EAPTGRDQGSGDRENPL. The tract at residues 446-488 is disordered; that stretch reads EAPTGRDQGSGDRENPLELRLSGSGPAELSAGEDEEEESELVS. Residue S475 is modified to Phosphoserine. The segment covering 476–485 has biased composition (acidic residues); the sequence is AGEDEEEESE. The residue at position 500 (S500) is a Phosphoserine. In terms of domain architecture, Rho-GAP spans 542-749; that stretch reads CQLESLCQRE…LMLTNFTSLF (208 aa).

Interacts with FASLG. Predominantly expressed in peripheral blood leukocytes, spleen, and thymus.

Its function is as follows. GTPase activator for the Rho-type GTPases by converting them to an inactive GDP-bound state. Has a substantial GAP activity toward CDC42 and RAC1 and less toward RHOA. Has a role in regulating adhesion of hematopoietic cells to the extracellular matrix. Binds phosphoinositides, and has the highest affinity for phosphatidylinositol 3,4,5-trisphosphate, followed by phosphatidylinositol 3,4-bisphosphate and phosphatidylinositol 4,5-bisphosphate. In Homo sapiens (Human), this protein is Rho GTPase-activating protein 9 (ARHGAP9).